The chain runs to 628 residues: DNA mismatch repair protein MutL (628 aa).

Residues serine 335 to proline 411 form a disordered region. Residues glutamate 343–threonine 353 show a composition bias toward polar residues.

Belongs to the DNA mismatch repair MutL/HexB family.

This protein is involved in the repair of mismatches in DNA. It is required for dam-dependent methyl-directed DNA mismatch repair. May act as a 'molecular matchmaker', a protein that promotes the formation of a stable complex between two or more DNA-binding proteins in an ATP-dependent manner without itself being part of a final effector complex. This Shewanella pealeana (strain ATCC 700345 / ANG-SQ1) protein is DNA mismatch repair protein MutL.